We begin with the raw amino-acid sequence, 144 residues long: SVVKSEDYALPSYVDRRDYPLPDVAHVRHLSASQKALKEKEKASWSSLSMDEKVELYRIQFKESFAEMNRGSNEWKTVVGAAMFFIGFTAILIILEKRYVYGPLPHTFDKEWVAMQTKRMLDLKVNPVDGLASKWDYDKKEWKK.

The Mitochondrial matrix segment spans residues 1–73 (SVVKSEDYAL…SFAEMNRGSN (73 aa)). K4 carries the post-translational modification N6-acetyllysine; alternate. At K4 the chain carries N6-succinyllysine; alternate. A phosphoserine mark is found at S31 and S33. K35 is subject to N6-acetyllysine; alternate. Residue K35 is modified to N6-succinyllysine; alternate. K42 is subject to N6-acetyllysine. A helical transmembrane segment spans residues 74 to 99 (EWKTVVGAAMFFIGFTAILIILEKRY). The Mitochondrial intermembrane segment spans residues 100–144 (VYGPLPHTFDKEWVAMQTKRMLDLKVNPVDGLASKWDYDKKEWKK).

The protein belongs to the cytochrome c oxidase IV family. In terms of assembly, component of the cytochrome c oxidase (complex IV, CIV), a multisubunit enzyme composed of 14 subunits. The complex is composed of a catalytic core of 3 subunits MT-CO1, MT-CO2 and MT-CO3, encoded in the mitochondrial DNA, and 11 supernumerary subunits COX4I, COX5A, COX5B, COX6A, COX6B, COX6C, COX7A, COX7B, COX7C, COX8 and NDUFA4, which are encoded in the nuclear genome. The complex exists as a monomer or a dimer and forms supercomplexes (SCs) in the inner mitochondrial membrane with NADH-ubiquinone oxidoreductase (complex I, CI) and ubiquinol-cytochrome c oxidoreductase (cytochrome b-c1 complex, complex III, CIII), resulting in different assemblies (supercomplex SCI(1)III(2)IV(1) and megacomplex MCI(2)III(2)IV(2)). Interacts with PHB2; the interaction decreases in absence of SPHK2. Interacts with AFG1L. Interacts with ABCB7; this interaction allows the regulation of cellular iron homeostasis and cellular reactive oxygen species (ROS) levels in cardiomyocytes. Interacts with FLVCR2; this interaction occurs in the absence of heme and is disrupted upon heme binding. Interacts with IRGC.

It localises to the mitochondrion inner membrane. Its pathway is energy metabolism; oxidative phosphorylation. Functionally, component of the cytochrome c oxidase, the last enzyme in the mitochondrial electron transport chain which drives oxidative phosphorylation. The respiratory chain contains 3 multisubunit complexes succinate dehydrogenase (complex II, CII), ubiquinol-cytochrome c oxidoreductase (cytochrome b-c1 complex, complex III, CIII) and cytochrome c oxidase (complex IV, CIV), that cooperate to transfer electrons derived from NADH and succinate to molecular oxygen, creating an electrochemical gradient over the inner membrane that drives transmembrane transport and the ATP synthase. Cytochrome c oxidase is the component of the respiratory chain that catalyzes the reduction of oxygen to water. Electrons originating from reduced cytochrome c in the intermembrane space (IMS) are transferred via the dinuclear copper A center (CU(A)) of subunit 2 and heme A of subunit 1 to the active site in subunit 1, a binuclear center (BNC) formed by heme A3 and copper B (CU(B)). The BNC reduces molecular oxygen to 2 water molecules using 4 electrons from cytochrome c in the IMS and 4 protons from the mitochondrial matrix. In Aotus azarae (Azara's night monkey), this protein is Cytochrome c oxidase subunit 4 isoform 1, mitochondrial (COX4I1).